A 314-amino-acid polypeptide reads, in one-letter code: Methionyl-tRNA formyltransferase (314 aa).

113–116 (SLLP) serves as a coordination point for (6S)-5,6,7,8-tetrahydrofolate.

The protein belongs to the Fmt family.

It carries out the reaction L-methionyl-tRNA(fMet) + (6R)-10-formyltetrahydrofolate = N-formyl-L-methionyl-tRNA(fMet) + (6S)-5,6,7,8-tetrahydrofolate + H(+). Functionally, attaches a formyl group to the free amino group of methionyl-tRNA(fMet). The formyl group appears to play a dual role in the initiator identity of N-formylmethionyl-tRNA by promoting its recognition by IF2 and preventing the misappropriation of this tRNA by the elongation apparatus. This Stutzerimonas stutzeri (strain A1501) (Pseudomonas stutzeri) protein is Methionyl-tRNA formyltransferase.